Consider the following 124-residue polypeptide: Nascent polypeptide-associated complex protein (124 aa).

In terms of domain architecture, NAC-A/B spans 7-74 (GLNPRKMKQM…PESRERGDSG (68 aa)). The tract at residues 53–124 (AQGQQTYQVV…DLAAAVQKLE (72 aa)) is disordered. A compositionally biased stretch (acidic residues) spans 74-93 (GSEDDSETESGGEFSEDDVE).

Belongs to the NAC-alpha family. Homodimer. Interacts with the ribosome. Binds ribosomal RNA.

Functionally, contacts the emerging nascent chain on the ribosome. This Natronomonas pharaonis (strain ATCC 35678 / DSM 2160 / CIP 103997 / JCM 8858 / NBRC 14720 / NCIMB 2260 / Gabara) (Halobacterium pharaonis) protein is Nascent polypeptide-associated complex protein.